A 459-amino-acid polypeptide reads, in one-letter code: Kelch-like protein terF (459 aa).

6 Kelch repeats span residues 92-144 (STVV…LVGD), 145-196 (EIFV…VVDG), 198-248 (IYYL…TVVV), 251-304 (TIYL…IYRD), 306-354 (LYIL…TIGS), and 355-405 (LIFT…VYKG).

The protein operates within secondary metabolite biosynthesis. In terms of biological role, kelch-like protein; part of the gene cluster that mediates the biosynthesis of terrein, a fungal metabolite with ecological, antimicrobial, antiproliferative, and antioxidative activities. The first step in the pathway is performed by the polyketide synthase terA that produces 4-hydroxy-6-methylpyranon (4-HMP), orsellinic acid (OA), and 2,3-dehydro-6-hydroxymellein (2,3-dehydro-6-HM) by condensing acetyl-CoA with two, three, or four malonyl-CoA units, respectively. 4-HMP and OA are not pathway intermediates, but are rather shunt or side products. 2,3-dehydro-6-HM is further converted to 6-hydroxymellein (6-HM) by the 6-hydroxymellein synthase terB. The monooxygenases terC and terD, the multicopper oxidase terE and the Kelch-like protein terF are then involved in the transformation of 6-HM to terrein. Even if they are co-regulated with the other terrein cluster genes, terH and terI seem to be dispensable for terrein production; whereas one or both of the 2 transporters terG and terJ are probably required for efficient secretion of metabolites. The protein is Kelch-like protein terF of Aspergillus terreus (strain NIH 2624 / FGSC A1156).